The sequence spans 637 residues: Chaperone protein DnaK (637 aa).

Thr-196 carries the post-translational modification Phosphothreonine; by autocatalysis. Disordered regions lie at residues 484–528 and 598–637; these read KATG…EVDT and TEAG…VDDK. The span at 501–528 shows a compositional bias: basic and acidic residues; sequence SETEIEKMKKDASSHADEDKKKKEEVDT. Residues 600–620 are compositionally biased toward low complexity; that stretch reads AGAPGAAGAAGAAGQGQSASS. A compositionally biased stretch (basic and acidic residues) spans 621–637; that stretch reads GKDDEVKNADFEVVDDK.

It belongs to the heat shock protein 70 family.

Its function is as follows. Acts as a chaperone. This is Chaperone protein DnaK from Chloroherpeton thalassium (strain ATCC 35110 / GB-78).